The primary structure comprises 196 residues: Cyclin-dependent kinase inhibitor 6 (196 aa).

2 disordered regions span residues 1 to 36 (MSERKRELAEEASSTSFSPLKKTKLNDSSDSSPDSH) and 55 to 151 (ASDE…RKTP). Residues 124–139 (SEGLGETTTEMESSSA) are compositionally biased toward low complexity. Thr-152 is modified (phosphothreonine; by KIN10).

It belongs to the CDI family. ICK/KRP subfamily. As to quaternary structure, specifically interacts with CDKA-1, but not with CDKB1-1. Interacts with CYCD1-1, CYCD4-1 and RHF1A. Binds to FBL17. Interacts with KIN10. Interacts with CYCD3-1. In terms of processing, ubiquitinated by RHF1A and SCF(FBL17). Ubiquitination leads to its subsequent degradation, thus controlling cell cycle progression. The phosphorylation at Thr-152 by KIN10 represses its activity. In terms of tissue distribution, expressed in newly formed organs such as the shoot apex. Expressed in cotyledon, primary root and marginal region of the leaves as well as in developing pollen.

It is found in the nucleus. Its subcellular location is the nucleoplasm. Down-regulated by KIN10 under a phosphorylation-dependent manner. Its function is as follows. Binds and inhibits CYCD2-1/CDKA-1 complex kinase activity. Regulates cell division which is crucial for plant growth, development and morphogenesis. May inhibit CDK kinases specifically involved in the G1/S phase transition. The protein is Cyclin-dependent kinase inhibitor 6 (KRP6) of Arabidopsis thaliana (Mouse-ear cress).